Reading from the N-terminus, the 450-residue chain is UDP-N-acetylmuramoylalanine--D-glutamate ligase (450 aa).

Gly-119–Thr-125 is a binding site for ATP.

This sequence belongs to the MurCDEF family.

Its subcellular location is the cytoplasm. It carries out the reaction UDP-N-acetyl-alpha-D-muramoyl-L-alanine + D-glutamate + ATP = UDP-N-acetyl-alpha-D-muramoyl-L-alanyl-D-glutamate + ADP + phosphate + H(+). The protein operates within cell wall biogenesis; peptidoglycan biosynthesis. Functionally, cell wall formation. Catalyzes the addition of glutamate to the nucleotide precursor UDP-N-acetylmuramoyl-L-alanine (UMA). This chain is UDP-N-acetylmuramoylalanine--D-glutamate ligase, found in Bacillus cereus (strain G9842).